A 336-amino-acid chain; its full sequence is MKIALDAMGGDYAPIETVKGALEAIKESNISVVLVGKEEEIKKILQDYHYNESKIEIVHAEEVIEMHEHPAFAVKEKEDSSIVKAIKLLKEKKVDGVVSAGNTGAVMSSALLYLGRIRGIKRPAISTLIPTLTQIPSIILDIGANVDCKKEYLEQFALMGKVYMEEIFNVKNPKIALLNIGEEEGKGNQLVQETYTLLKNNPLFNFIGNVEGKDLFKGTANVIVCDGFVGNVAIKTAEGVAETLFDLLSSEIKSSLWSIILGLLLKPKFKNVKKKLDYSEFGGAPLLGVDGTVIISHGRSKAKAIKNALKVAEKMVKLEVNKKILEGLNKITDRGD.

Belongs to the PlsX family. In terms of assembly, homodimer. Probably interacts with PlsY.

The protein localises to the cytoplasm. It catalyses the reaction a fatty acyl-[ACP] + phosphate = an acyl phosphate + holo-[ACP]. Its pathway is lipid metabolism; phospholipid metabolism. In terms of biological role, catalyzes the reversible formation of acyl-phosphate (acyl-PO(4)) from acyl-[acyl-carrier-protein] (acyl-ACP). This enzyme utilizes acyl-ACP as fatty acyl donor, but not acyl-CoA. The chain is Phosphate acyltransferase from Dictyoglomus turgidum (strain DSM 6724 / Z-1310).